Reading from the N-terminus, the 113-residue chain is UPF0122 protein MCAP_0480 (113 aa).

This sequence belongs to the UPF0122 family.

Its function is as follows. Might take part in the signal recognition particle (SRP) pathway. This is inferred from the conservation of its genetic proximity to ftsY/ffh. May be a regulatory protein. The protein is UPF0122 protein MCAP_0480 of Mycoplasma capricolum subsp. capricolum (strain California kid / ATCC 27343 / NCTC 10154).